The sequence spans 98 residues: NADH-ubiquinone oxidoreductase chain 4L (98 aa).

The next 3 membrane-spanning stretches (helical) occupy residues 1–21 (MSLT…GLLM), 30–50 (LLCL…TILI), and 61–81 (IILL…LVAV).

Belongs to the complex I subunit 4L family. Core subunit of respiratory chain NADH dehydrogenase (Complex I) which is composed of 45 different subunits.

The protein resides in the mitochondrion inner membrane. The catalysed reaction is a ubiquinone + NADH + 5 H(+)(in) = a ubiquinol + NAD(+) + 4 H(+)(out). Its function is as follows. Core subunit of the mitochondrial membrane respiratory chain NADH dehydrogenase (Complex I) which catalyzes electron transfer from NADH through the respiratory chain, using ubiquinone as an electron acceptor. Part of the enzyme membrane arm which is embedded in the lipid bilayer and involved in proton translocation. The chain is NADH-ubiquinone oxidoreductase chain 4L (MT-ND4L) from Pipistrellus abramus (Japanese pipistrelle).